Reading from the N-terminus, the 216-residue chain is Sperm microtubule inner protein 8 (216 aa).

Microtubule inner protein component of sperm flagellar doublet microtubules. In terms of tissue distribution, expressed in testis.

It localises to the cytoplasm. Its subcellular location is the cytoskeleton. The protein resides in the flagellum axoneme. Microtubule inner protein (MIP) part of the dynein-decorated doublet microtubules (DMTs) in flagellum axoneme. May serve to reinforce and thus stabilize the microtubule structure in the sperm flagella. The sequence is that of Sperm microtubule inner protein 8 (Spmip8) from Mus musculus (Mouse).